The sequence spans 543 residues: CTP synthase (543 aa).

The interval 1-267 (MKQTKYIFVT…LNPIAEILDL (267 aa)) is amidoligase domain. S15 is a binding site for CTP. Residue S15 participates in UTP binding. Residues 16–21 (SLGKGI) and D73 contribute to the ATP site. Residues D73 and E141 each coordinate Mg(2+). Residues 148–150 (DIE), 188–193 (KTKPTQ), and K224 contribute to the CTP site. UTP-binding positions include 188-193 (KTKPTQ) and K224. The Glutamine amidotransferase type-1 domain occupies 292–543 (KIAFVGKYVD…IKAAINYEDN (252 aa)). G354 is a binding site for L-glutamine. Catalysis depends on C381, which acts as the Nucleophile; for glutamine hydrolysis. Residues 382-385 (LGMQ), E405, and R473 each bind L-glutamine. Residues H516 and E518 contribute to the active site.

The protein belongs to the CTP synthase family. As to quaternary structure, homotetramer.

It carries out the reaction UTP + L-glutamine + ATP + H2O = CTP + L-glutamate + ADP + phosphate + 2 H(+). The enzyme catalyses L-glutamine + H2O = L-glutamate + NH4(+). The catalysed reaction is UTP + NH4(+) + ATP = CTP + ADP + phosphate + 2 H(+). It participates in pyrimidine metabolism; CTP biosynthesis via de novo pathway; CTP from UDP: step 2/2. Allosterically activated by GTP, when glutamine is the substrate; GTP has no effect on the reaction when ammonia is the substrate. The allosteric effector GTP functions by stabilizing the protein conformation that binds the tetrahedral intermediate(s) formed during glutamine hydrolysis. Inhibited by the product CTP, via allosteric rather than competitive inhibition. In terms of biological role, catalyzes the ATP-dependent amination of UTP to CTP with either L-glutamine or ammonia as the source of nitrogen. Regulates intracellular CTP levels through interactions with the four ribonucleotide triphosphates. The protein is CTP synthase of Campylobacter jejuni subsp. doylei (strain ATCC BAA-1458 / RM4099 / 269.97).